The sequence spans 1342 residues: DNA-directed RNA polymerase subunit beta (1342 aa).

Belongs to the RNA polymerase beta chain family. As to quaternary structure, the RNAP catalytic core consists of 2 alpha, 1 beta, 1 beta' and 1 omega subunit. When a sigma factor is associated with the core the holoenzyme is formed, which can initiate transcription.

It carries out the reaction RNA(n) + a ribonucleoside 5'-triphosphate = RNA(n+1) + diphosphate. DNA-dependent RNA polymerase catalyzes the transcription of DNA into RNA using the four ribonucleoside triphosphates as substrates. In Vibrio campbellii (strain ATCC BAA-1116), this protein is DNA-directed RNA polymerase subunit beta.